We begin with the raw amino-acid sequence, 2381 residues long: Highly reducing polyketide synthase virA (2381 aa).

Positions 1–420 (MDALHLACHL…GANGHVILES (420 aa)) constitute a Ketosynthase family 3 (KS3) domain. Residues Cys171, His306, and His344 each act as for beta-ketoacyl synthase activity in the active site. Positions 535 to 851 (VFTGQGAQYA…PYSPTLVRKE (317 aa)) are malonyl-CoA:ACP transacylase (MAT) domain. The For malonyltransferase activity role is filled by Ser629. The tract at residues 920-1064 (HELLGTRATA…GSIRVMESTL (145 aa)) is N-terminal hotdog fold. A dehydratase (DH) domain region spans residues 920–1232 (HELLGTRATA…HLRMNEYTGK (313 aa)). The region spanning 920–1235 (HELLGTRATA…MNEYTGKAPV (316 aa)) is the PKS/mFAS DH domain. Residue His952 is the Proton acceptor; for dehydratase activity of the active site. The interval 1078–1235 (HEVWGMSRWY…MNEYTGKAPV (158 aa)) is C-terminal hotdog fold. The Proton donor; for dehydratase activity role is filled by Asp1144. The enoyl reductase (ER) domain stretch occupies residues 1639–1956 (GMTDTIHFQQ…NKDRVGKVVV (318 aa)). The tract at residues 1981–2159 (TYLLVGCLGG…AVSVGLGMIS (179 aa)) is ketoreductase (KR) domain. Positions 2297–2375 (TMLDAILRLT…TLAEFIEEKL (79 aa)) constitute a Carrier domain. Ser2334 is modified (O-(pantetheine 4'-phosphoryl)serine).

The protein operates within secondary metabolite biosynthesis. In terms of biological role, highly reducing polyketide synthase; part of the gene cluster that mediates the biosynthesis of virensols and trichoxide, fungal natural products that contain or are derived from a salicylaldehyde core. The pathway begins with the synthesis of the reduced chain in virensol C by the highly reducing polyketide synthase virA via condensation of one acetate and 8 malonate units. VirA has interesting programming rules since the first 2 ketides are fully reduced, the 3 following ketides undergo beta-dehydration, and the last 3 ketides are only reduced to beta-hydroxys to yield the trihydroxy portion. The production of aldehyde virensol C by virA alone is surprising, since virA does not contain a reductase (R) domain that is typically associated with reductive product release in HRPKS. The cupin-domain enzyme virC is involved in enhancing virA product turnover. The short-chain dehydrogenase virB then oxidizes the C-7 alcohol of virensol C to a ketone, yielding virensol D. Virensol D is further transformed to salicylaldehyde 5-deoxyaurocitrin by the short-chain dehydrogenase virD. VirD catalyzes the dehydrogenation of C-3 to form the beta-ketone aldehyde, which is followed by the generation of the nucleophilic C-2 that is required for the intramolecular aldol condensation between C-2 and C-7, itself followed by dehydration and aromatization which leads to salicylaldehyde 5-deoxyaurocitrin. While the dehydrogenation of virensol D is definitely catalyzed by virD, the aldol condensation and dehydration may be uncatalyzed or assisted by virD. The short chain dehydrogenase virG then converts salicylaldehyde 5-deoxyaurocitrin into virensol B which is further hydroxylated by the cytochrome P450 monooxygenase virE to yield the hydroquinone virensol A. VirI then may oxidize virensol A to form the quinone, while virH performs the epoxidation. Finally, the two remaining short-chain dehydrogenases, virK and virL, are probably responsible for reducing the ketones to the corresponding alcohols to furnish the epoxycyclohexanol structure in trichoxide. This chain is Highly reducing polyketide synthase virA, found in Hypocrea virens (strain Gv29-8 / FGSC 10586) (Gliocladium virens).